The following is a 461-amino-acid chain: Elongation factor 1-alpha (461 aa).

Glycine 2 carries the n,N,N-trimethylglycine modification. Positions 5 to 242 constitute a tr-type G domain; sequence KIHINIVVIG…DAILPPSRPT (238 aa). The tract at residues 14–21 is G1; that stretch reads GHVDSGKS. 14–21 contacts GTP; the sequence is GHVDSGKS. A G2 region spans residues 70 to 74; sequence GITID. The interval 91–94 is G3; the sequence is DAPG. GTP-binding positions include 153 to 156 and 194 to 196; these read NKMD and SGW. A G4 region spans residues 153 to 156; it reads NKMD. Residues 194–196 form a G5 region; the sequence is SGW. 5-glutamyl glycerylphosphorylethanolamine occurs at positions 301 and 374.

It belongs to the TRAFAC class translation factor GTPase superfamily. Classic translation factor GTPase family. EF-Tu/EF-1A subfamily.

It is found in the cytoplasm. The catalysed reaction is GTP + H2O = GDP + phosphate + H(+). In terms of biological role, translation elongation factor that catalyzes the GTP-dependent binding of aminoacyl-tRNA (aa-tRNA) to the A-site of ribosomes during the elongation phase of protein synthesis. Base pairing between the mRNA codon and the aa-tRNA anticodon promotes GTP hydrolysis, releasing the aa-tRNA from EEF1A1 and allowing its accommodation into the ribosome. The growing protein chain is subsequently transferred from the P-site peptidyl tRNA to the A-site aa-tRNA, extending it by one amino acid through ribosome-catalyzed peptide bond formation. The chain is Elongation factor 1-alpha (eef1a) from Oryzias latipes (Japanese rice fish).